Consider the following 646-residue polypeptide: Threonine--tRNA ligase (646 aa).

Residues 1 to 61 (MIKITFPDGS…NEDADFVLYK (61 aa)) enclose the TGS domain. Positions 242-541 (DHRKIGKEMQ…LIEHTAGKFP (300 aa)) are catalytic. Zn(2+)-binding residues include cysteine 337, histidine 388, and histidine 518.

This sequence belongs to the class-II aminoacyl-tRNA synthetase family. In terms of assembly, homodimer. It depends on Zn(2+) as a cofactor.

The protein resides in the cytoplasm. It carries out the reaction tRNA(Thr) + L-threonine + ATP = L-threonyl-tRNA(Thr) + AMP + diphosphate + H(+). Functionally, catalyzes the attachment of threonine to tRNA(Thr) in a two-step reaction: L-threonine is first activated by ATP to form Thr-AMP and then transferred to the acceptor end of tRNA(Thr). Also edits incorrectly charged L-seryl-tRNA(Thr). This Bacteroides thetaiotaomicron (strain ATCC 29148 / DSM 2079 / JCM 5827 / CCUG 10774 / NCTC 10582 / VPI-5482 / E50) protein is Threonine--tRNA ligase.